Reading from the N-terminus, the 247-residue chain is KLCAIWIYLDVLFSTASIMHLCAISLDRYVAIQNPIHHSRFNSRTKAFLKIIAVWTISVGISMPVPVFGLQDDSKVFKEGSCLLADDNFVLIGSFVAFFIPLTIMVITYFLTIKSLQKEATLCVSDPGTRAKLSSFSFLPQSSLSSEKLFQRSIHRETGSYAGRRTMQSISNEQKACKVLGIVFFLFVVMWCPFFVTNIMAVICKESCNEDVIGALLNVFVWIGYLSSAVNPLVYTLFNKTYRSAFA.

Residue Lys1 is a topological domain, extracellular. A helical membrane pass occupies residues 2-26 (LCAIWIYLDVLFSTASIMHLCAISL). Cys3 and Cys82 are disulfide-bonded. Asp10 is a serotonin binding site. The short motif at 27–29 (DRY) is the DRY motif; important for ligand-induced conformation changes element. Residues 27–46 (DRYVAIQNPIHHSRFNSRTK) lie on the Cytoplasmic side of the membrane. A helical membrane pass occupies residues 47–70 (AFLKIIAVWTISVGISMPVPVFGL). Over 71–87 (QDDSKVFKEGSCLLADD) the chain is Extracellular. Residues 88–113 (NFVLIGSFVAFFIPLTIMVITYFLTI) traverse the membrane as a helical segment. At 114–177 (KSLQKEATLC…QSISNEQKAC (64 aa)) the chain is on the cytoplasmic side. Ser135 is subject to Phosphoserine. Residues 178-203 (KVLGIVFFLFVVMWCPFFVTNIMAVI) traverse the membrane as a helical segment. Asn198 contacts serotonin. Cys204 and Cys208 form a disulfide bridge. Over 204-211 (CKESCNED) the chain is Extracellular. Residues 212 to 237 (VIGALLNVFVWIGYLSSAVNPLVYTL) form a helical membrane-spanning segment. The NPxxY motif; important for ligand-induced conformation changes and signaling motif lies at 231 to 235 (NPLVY). Over 238 to 247 (FNKTYRSAFA) the chain is Cytoplasmic.

The protein belongs to the G-protein coupled receptor 1 family. In terms of assembly, interacts (via C-terminus) with MPDZ and PATJ. May interact (via C-terminus) with MPP3, PRDX6, DLG4, DLG1, CASK, APBA1 and MAGI2. Interacts with GRM2 and DRD2; this may affect signaling. In terms of tissue distribution, detected in adult intestine, especially in mucosal epithelium, longitudinal and circular layers of muscularis externa and myenteric plexuses. Highly expressed in Paneth cells, and detected at lower levels in enterocytes (at protein level).

The protein resides in the cell membrane. It is found in the cell projection. Its subcellular location is the dendrite. The protein localises to the axon. It localises to the cytoplasmic vesicle. The protein resides in the membrane. It is found in the caveola. Its subcellular location is the presynapse. With respect to regulation, G-protein coupled receptor activity is regulated by lipids: oleamide increases HTR2A-mediated activity. Its function is as follows. G-protein coupled receptor for 5-hydroxytryptamine (serotonin). Also functions as a receptor for various drugs and psychoactive substances, including mescaline, psilocybin, 1-(2,5-dimethoxy-4-iodophenyl)-2-aminopropane (DOI) and lysergic acid diethylamide (LSD). Ligand binding causes a conformation change that triggers signaling via guanine nucleotide-binding proteins (G proteins) and modulates the activity of downstream effectors. HTR2A is coupled to G(q)/G(11) G alpha proteins and activates phospholipase C-beta, releasing diacylglycerol (DAG) and inositol 1,4,5-trisphosphate (IP3) second messengers that modulate the activity of phosphatidylinositol 3-kinase and promote the release of Ca(2+) ions from intracellular stores, respectively. Beta-arrestin family members inhibit signaling via G proteins and mediate activation of alternative signaling pathways. Affects neural activity, perception, cognition and mood. Plays a role in the regulation of behavior, including responses to anxiogenic situations and psychoactive substances. Plays a role in intestinal smooth muscle contraction, and may play a role in arterial vasoconstriction. This Cavia porcellus (Guinea pig) protein is 5-hydroxytryptamine receptor 2A (HTR2A).